The chain runs to 571 residues: Potassium-transporting ATPase potassium-binding subunit (571 aa).

Transmembrane regions (helical) follow at residues 5–25 (GWIQ…PLGS), 64–84 (LAYT…LYAI), 136–156 (GLTH…VALI), 179–199 (LYVL…QGIP), 254–274 (LSNL…TNVF), 285–305 (WAIL…TYWA), 330–350 (FGIA…CGAV), 357–376 (FTAL…EIII), 421–441 (MLGI…ATVV), 488–508 (LAIG…AIAG), and 527–547 (GGLF…LTFF).

It belongs to the KdpA family. In terms of assembly, the system is composed of three essential subunits: KdpA, KdpB and KdpC.

The protein localises to the cell inner membrane. Its function is as follows. Part of the high-affinity ATP-driven potassium transport (or Kdp) system, which catalyzes the hydrolysis of ATP coupled with the electrogenic transport of potassium into the cytoplasm. This subunit binds the periplasmic potassium ions and delivers the ions to the membrane domain of KdpB through an intramembrane tunnel. The protein is Potassium-transporting ATPase potassium-binding subunit of Methylobacterium radiotolerans (strain ATCC 27329 / DSM 1819 / JCM 2831 / NBRC 15690 / NCIMB 10815 / 0-1).